The sequence spans 474 residues: MKLFNTLTRQKEEFKPLVPGQVSMYVCGPTVYNYIHIGNARSAIAFDTIRRYFEYKGYKVNYVSNFTDVDDKMINEAGAEGTTVPELAERYIQAFLEDTRALNIEEATLHPRATHEIPAIIDFIQTLIDKGYAYEADGDVYYRAKKFADYGHLSDQNIDQLEEGASQHVNDEEQGRKEDPIDFALWKGQKAADEIAWDSPWGKGRPGWHIECSVMSTKYLGDTLDIHGGGQDLEFPHHENEIAQSEAKTGKKFVNYWLHNGFVTVGKDEEKMSKSLHNFVTVYDILKNVDPQVLRFFMASVQYRSQINYSEENLEQAANILGRFKNTLEGINYRLADATEGLPDPDLAKLVTETTAKFEAAMDDDFNVQNALTAIYEALPAVNSNANAEKADKESLRLFAKKLAAWLSVFGLDVDKLLAKEAGDDDAVIEELVAQRTEARKNKDWAKSDELRDQLKEMGVVLKDTPQGTRWSRE.

A Zn(2+)-binding site is contributed by C27. Residues 29–39 carry the 'HIGH' region motif; the sequence is PTVYNYIHIGN. Zn(2+)-binding residues include C212, H237, and E241. The 'KMSKS' region motif lies at 271–275; sequence KMSKS. ATP is bound at residue K274.

Belongs to the class-I aminoacyl-tRNA synthetase family. As to quaternary structure, monomer. Requires Zn(2+) as cofactor.

The protein resides in the cytoplasm. The catalysed reaction is tRNA(Cys) + L-cysteine + ATP = L-cysteinyl-tRNA(Cys) + AMP + diphosphate. This Lactobacillus delbrueckii subsp. bulgaricus (strain ATCC BAA-365 / Lb-18) protein is Cysteine--tRNA ligase.